Reading from the N-terminus, the 574-residue chain is K(+)/H(+) antiporter NhaP2 (574 aa).

13 helical membrane passes run 6 to 26 (INSFFLIGALLTAVSVLLSPM), 34 to 54 (ILLIFLAVGILAGEDGPGGIL), 58 to 78 (YSTAYLVSNFALAIILLDGGM), 87 to 107 (VALWPALSLATFGVAITTSIT), 109 to 129 (VMAAWLFDLHWLQGLLVGAIV), 173 to 193 (IAILANVGAELSASFMLISFI), 196 to 216 (FGLGVLLGLGGGWLLWKLVNV), 219 to 239 (LAEGLYSILVLSGGLMIYATS), 242 to 262 (LGGSGILSIYLVGLFLGNKPT), 271 to 291 (VLDGMTWVSQIGMFLVLGLLL), 299 to 319 (IWLPGLALAFGMILFARPLAV), 335 to 355 (WFISWVGLRGAVPIILAVFPM), and 359 to 379 (LPGAQLYFNLAFFVVIVSLLV). Residues 405–486 (SGVEIYPKSE…LEALSNLFSQ (82 aa)) form the RCK C-terminal domain.

The protein belongs to the monovalent cation:proton antiporter 1 (CPA1) transporter (TC 2.A.36) family. NhaP2 subfamily.

The protein localises to the cell inner membrane. The catalysed reaction is K(+)(in) + H(+)(out) = K(+)(out) + H(+)(in). Its function is as follows. K(+)/H(+) antiporter that extrudes potassium in exchange for external protons and maintains the internal concentration of potassium under toxic levels. In Shewanella oneidensis (strain ATCC 700550 / JCM 31522 / CIP 106686 / LMG 19005 / NCIMB 14063 / MR-1), this protein is K(+)/H(+) antiporter NhaP2.